The following is a 125-amino-acid chain: Translation initiation factor 5A (125 aa).

A Hypusine modification is found at lysine 36.

It belongs to the eIF-5A family.

The protein resides in the cytoplasm. Functionally, functions by promoting the formation of the first peptide bond. The protein is Translation initiation factor 5A (eIF5A) of Halorubrum lacusprofundi (strain ATCC 49239 / DSM 5036 / JCM 8891 / ACAM 34).